The primary structure comprises 206 residues: Phosphatidyl-N-methylethanolamine N-methyltransferase (206 aa).

The Lumenal segment spans residues 1–20 (MKESVQEIIQQLIHSVDLQS). Residues 21-41 (SKFQLAIVCTMFNPIFWNIVA) constitute an intramembrane region (helical). The Lumenal segment spans residues 42-53 (RMEYHKHSLTKM). The helical transmembrane segment at 54 to 74 (CGGARKGCYMLAATIFSLGIV) threads the bilayer. Topologically, residues 75 to 101 (RDMVYESALREQPTCSLITGENWTKLG) are cytoplasmic. Residues 102-122 (VALFGLGQVLVLSSMYKLGIT) form a helical membrane-spanning segment. Position 106–108 (106–108 (GLG)) interacts with S-adenosyl-L-methionine. Residues 123-165 (GTYLGDYFGILMDERVTGFPFNVSNNPMYQGSTLSFLGIALYK) are Lumenal-facing. The chain crosses the membrane as a helical span at residues 166–186 (GKPAGLVVSAVVYFMYKIALR). Residues 187–206 (WEEPFTAMIYANRDKAKKNM) are Cytoplasmic-facing. 188–189 (EE) is an S-adenosyl-L-methionine binding site.

The protein belongs to the class VI-like SAM-binding methyltransferase superfamily. PEMT/PEM2 methyltransferase family.

Its subcellular location is the endoplasmic reticulum membrane. The protein localises to the mitochondrion membrane. It catalyses the reaction a 1,2-diacyl-sn-glycero-3-phosphoethanolamine + S-adenosyl-L-methionine = a 1,2-diacyl-sn-glycero-3-phospho-N-methylethanolamine + S-adenosyl-L-homocysteine + H(+). The catalysed reaction is a 1,2-diacyl-sn-glycero-3-phospho-N-methylethanolamine + S-adenosyl-L-methionine = a 1,2-diacyl-sn-glycero-3-phospho-N,N-dimethylethanolamine + S-adenosyl-L-homocysteine + H(+). It carries out the reaction a 1,2-diacyl-sn-glycero-3-phospho-N,N-dimethylethanolamine + S-adenosyl-L-methionine = a 1,2-diacyl-sn-glycero-3-phosphocholine + S-adenosyl-L-homocysteine + H(+). It functions in the pathway phospholipid metabolism; phosphatidylcholine biosynthesis. Its function is as follows. Catalyzes the second two steps of the methylation pathway of phosphatidylcholine biosynthesis, the SAM-dependent methylation of phosphatidylmonomethylethanolamine (PMME) to phosphatidyldimethylethanolamine (PDME) and of PDME to phosphatidylcholine (PC). Can also catalyze the first methylation reaction of PE to PMME in the absence of PE methyltransferase CHO2. This Saccharomyces cerevisiae (strain ATCC 204508 / S288c) (Baker's yeast) protein is Phosphatidyl-N-methylethanolamine N-methyltransferase.